The sequence spans 398 residues: Tyrosine--tRNA ligase (398 aa).

The 'HIGH' region signature appears at 42-51 (PTAPDLHLGH). Positions 226–230 (KMSKS) match the 'KMSKS' region motif. An ATP-binding site is contributed by lysine 229. The S4 RNA-binding domain occupies 341–397 (AFLEAAGLVKSRGEAKRLIKEGALSVDGVRCDDANSPLASGEYVIKLGKKRFLRLTV).

Belongs to the class-I aminoacyl-tRNA synthetase family. TyrS type 2 subfamily. In terms of assembly, homodimer.

The protein localises to the cytoplasm. It catalyses the reaction tRNA(Tyr) + L-tyrosine + ATP = L-tyrosyl-tRNA(Tyr) + AMP + diphosphate + H(+). In terms of biological role, catalyzes the attachment of tyrosine to tRNA(Tyr) in a two-step reaction: tyrosine is first activated by ATP to form Tyr-AMP and then transferred to the acceptor end of tRNA(Tyr). The polypeptide is Tyrosine--tRNA ligase (Nitratidesulfovibrio vulgaris (strain ATCC 29579 / DSM 644 / CCUG 34227 / NCIMB 8303 / VKM B-1760 / Hildenborough) (Desulfovibrio vulgaris)).